Consider the following 414-residue polypeptide: MSLEMFDKEIFDLTNKELERQCEGLEMIASENFTLPEVMEVMGSILTNKYAEGYPGKRYYGGCEFVDEIETLAIQRCKKLFNCKFANVQPNSGSQANQGVYAALINPGDKILGMDLSHGGHLTHGAKVSSSGKMYESCFYGVELDGRIDYEKVREIAKKEKPKLIVCGASAYARVIDFAKFREIADEIGAYLFADIAHIAGLVVAGEHPSPFPYAHVVSSTTHKTLRGPRGGIIMTNDEEFAKKINSAIFPGIQGGPLMHVIAAKAVGFKFNLSDEWKIYAKQVRTNAQVLANVLMDRKFKLVSDGTDNHLVLMSFLDREFSGKDADLALGNAGITANKNTVPGEIRSPFITSGLRLGTPALTARGFKEKEMEIVSNYIADILDDINNEKLQENIKQELKKLASNFIIYERAMF.

Residues L116 and 120–122 each bind (6S)-5,6,7,8-tetrahydrofolate; that span reads GHL. K224 carries the post-translational modification N6-(pyridoxal phosphate)lysine. Residues E240 and 348 to 350 each bind (6S)-5,6,7,8-tetrahydrofolate; that span reads SPF.

It belongs to the SHMT family. Homodimer. It depends on pyridoxal 5'-phosphate as a cofactor.

The protein localises to the cytoplasm. The enzyme catalyses (6R)-5,10-methylene-5,6,7,8-tetrahydrofolate + glycine + H2O = (6S)-5,6,7,8-tetrahydrofolate + L-serine. It participates in one-carbon metabolism; tetrahydrofolate interconversion. It functions in the pathway amino-acid biosynthesis; glycine biosynthesis; glycine from L-serine: step 1/1. Catalyzes the reversible interconversion of serine and glycine with tetrahydrofolate (THF) serving as the one-carbon carrier. This reaction serves as the major source of one-carbon groups required for the biosynthesis of purines, thymidylate, methionine, and other important biomolecules. Also exhibits THF-independent aldolase activity toward beta-hydroxyamino acids, producing glycine and aldehydes, via a retro-aldol mechanism. This is Serine hydroxymethyltransferase from Campylobacter jejuni subsp. jejuni serotype O:23/36 (strain 81-176).